The primary structure comprises 156 residues: ATP synthase subunit b (156 aa).

Residues 1–21 (MNVTVTLIGQMVAFGILVWFV) form a helical membrane-spanning segment.

This sequence belongs to the ATPase B chain family. F-type ATPases have 2 components, F(1) - the catalytic core - and F(0) - the membrane proton channel. F(1) has five subunits: alpha(3), beta(3), gamma(1), delta(1), epsilon(1). F(0) has three main subunits: a(1), b(2) and c(10-14). The alpha and beta chains form an alternating ring which encloses part of the gamma chain. F(1) is attached to F(0) by a central stalk formed by the gamma and epsilon chains, while a peripheral stalk is formed by the delta and b chains.

The protein localises to the cell inner membrane. F(1)F(0) ATP synthase produces ATP from ADP in the presence of a proton or sodium gradient. F-type ATPases consist of two structural domains, F(1) containing the extramembraneous catalytic core and F(0) containing the membrane proton channel, linked together by a central stalk and a peripheral stalk. During catalysis, ATP synthesis in the catalytic domain of F(1) is coupled via a rotary mechanism of the central stalk subunits to proton translocation. Functionally, component of the F(0) channel, it forms part of the peripheral stalk, linking F(1) to F(0). The protein is ATP synthase subunit b of Nitrosococcus oceani (strain ATCC 19707 / BCRC 17464 / JCM 30415 / NCIMB 11848 / C-107).